Consider the following 201-residue polypeptide: MSNESNNTSQDQVEEAVTPEIVVDEASLMDELTQANFRIEELEQLLAESETALAERKDVEMRAAAETQNIRTRAAKDVEQARKFALEKFANELLPVIDNMERALQGTNPEDEATKAIYEGVELTMKGFLTSVEKFGVTQVNPQGQAFNPEHHQAIGMQPSAEYPANTVMMVMQKGYLLNDRLLRPAMVMVSQGGGSVDVEA.

This sequence belongs to the GrpE family. Homodimer.

The protein resides in the cytoplasm. Participates actively in the response to hyperosmotic and heat shock by preventing the aggregation of stress-denatured proteins, in association with DnaK and GrpE. It is the nucleotide exchange factor for DnaK and may function as a thermosensor. Unfolded proteins bind initially to DnaJ; upon interaction with the DnaJ-bound protein, DnaK hydrolyzes its bound ATP, resulting in the formation of a stable complex. GrpE releases ADP from DnaK; ATP binding to DnaK triggers the release of the substrate protein, thus completing the reaction cycle. Several rounds of ATP-dependent interactions between DnaJ, DnaK and GrpE are required for fully efficient folding. This chain is Protein GrpE, found in Shewanella frigidimarina (strain NCIMB 400).